Consider the following 309-residue polypeptide: Sulfate adenylyltransferase subunit 2 (309 aa).

Belongs to the PAPS reductase family. CysD subfamily. In terms of assembly, heterodimer composed of CysD, the smaller subunit, and CysN.

It catalyses the reaction sulfate + ATP + H(+) = adenosine 5'-phosphosulfate + diphosphate. Its pathway is sulfur metabolism; hydrogen sulfide biosynthesis; sulfite from sulfate: step 1/3. Its function is as follows. With CysN forms the ATP sulfurylase (ATPS) that catalyzes the adenylation of sulfate producing adenosine 5'-phosphosulfate (APS) and diphosphate, the first enzymatic step in sulfur assimilation pathway. APS synthesis involves the formation of a high-energy phosphoric-sulfuric acid anhydride bond driven by GTP hydrolysis by CysN coupled to ATP hydrolysis by CysD. The polypeptide is Sulfate adenylyltransferase subunit 2 (Mycobacterium sp. (strain KMS)).